A 378-amino-acid chain; its full sequence is Chloroplast stem-loop binding protein of 41 kDa b, chloroplastic (378 aa).

The N-terminal 50 residues, 1-50, are a transit peptide targeting the chloroplast; the sequence is MAKMMMLQQHQPSFSLLTSSLSDFNGAKLHLQVQYKRKVHQPKGALYVSA. A Phosphoserine modification is found at Ser-240.

Belongs to the NAD(P)-dependent epimerase/dehydratase family. Component of a complex made of CSP41A, CSP41B, ribosomes, and the plastid-encoded RNA polymerase. Interacts with CSP41A. Binds DNA when in complex with PRIN2. In terms of tissue distribution, highly expressed in seedlings, particularly in photosynthetically active organs. Mostly expressed in young and mature leaves, and, to a lower extent, in flowers. Low expression in etiolated seedlings compared to green seedlings.

The protein localises to the plastid. It localises to the chloroplast. The protein resides in the plastoglobule. Its subcellular location is the cytoplasm. Its function is as follows. Binds and cleaves RNA, particularly in stem-loops. Associates with pre-ribosomal particles in chloroplasts, and participates in chloroplast ribosomal RNA metabolism, probably during the final steps of 23S rRNA maturation. May enhance transcription by the plastid-encoded polymerase and translation in plastid via the stabilization of ribosome assembly intermediates. Required for chloroplast integrity. Involved in the regulation of the circadian system. Involved in the regulation of heteroglycans and monosaccharide mobilization. Required for full expression of genes transcribed by the plastid-encoded RNA polymerase (PEP). Essential for embryo development. This Arabidopsis thaliana (Mouse-ear cress) protein is Chloroplast stem-loop binding protein of 41 kDa b, chloroplastic (CSP41B).